Consider the following 542-residue polypeptide: Chondroitin sulfate N-acetylgalactosaminyltransferase 2 (542 aa).

Residues 1-13 are Cytoplasmic-facing; it reads MSRRGSILHSRTQ. A helical; Signal-anchor for type II membrane protein membrane pass occupies residues 14–34; that stretch reads WLLLGLALLFSLVLFMYLLEC. The Lumenal segment spans residues 35–542; the sequence is APQTDGNASL…AYRTNSETAG (508 aa). A glycan (N-linked (GlcNAc...) asparagine) is linked at asparagine 41. Residues 59 to 105 are a coiled coil; it reads ALLQEQEEHYQTRATSLKRQIAQLKQELQDMSEKMRALQERKKLGAN. Asparagine 333 carries N-linked (GlcNAc...) asparagine glycosylation. A divalent metal cation is bound by residues aspartate 369 and histidine 486.

The protein belongs to the chondroitin N-acetylgalactosaminyltransferase family.

Its subcellular location is the golgi apparatus. It is found in the golgi stack membrane. It carries out the reaction 3-O-(beta-D-GlcA-(1-&gt;3)-beta-D-Gal-(1-&gt;3)-beta-D-Gal-(1-&gt;4)-beta-D-Xyl)-L-seryl-[protein] + UDP-N-acetyl-alpha-D-galactosamine = 3-O-(beta-D-GalNAc-(1-&gt;4)-beta-D-GlcA-(1-&gt;3)-beta-D-Gal-(1-&gt;3)-beta-D-Gal-(1-&gt;4)-beta-D-Xyl)-L-seryl-[protein] + UDP + H(+). In terms of biological role, transfers 1,4-N-acetylgalactosamine (GalNAc) from UDP-GalNAc to the non-reducing end of glucuronic acid (GlcUA). Required for addition of the first GalNAc to the core tetrasaccharide linker and for elongation of chondroitin chains. The sequence is that of Chondroitin sulfate N-acetylgalactosaminyltransferase 2 (Csgalnact2) from Mus musculus (Mouse).